The primary structure comprises 72 residues: UPF0352 protein CGSHiGG_07710 (72 aa).

It belongs to the UPF0352 family.

This chain is UPF0352 protein CGSHiGG_07710, found in Haemophilus influenzae (strain PittGG).